The sequence spans 239 residues: tRNA (guanine-N(1)-)-methyltransferase (239 aa).

S-adenosyl-L-methionine-binding positions include glycine 110 and 130–135; that span reads VGDYVL.

It belongs to the RNA methyltransferase TrmD family. In terms of assembly, homodimer.

The protein localises to the cytoplasm. It catalyses the reaction guanosine(37) in tRNA + S-adenosyl-L-methionine = N(1)-methylguanosine(37) in tRNA + S-adenosyl-L-homocysteine + H(+). Its function is as follows. Specifically methylates guanosine-37 in various tRNAs. This Borrelia hermsii (strain HS1 / DAH) protein is tRNA (guanine-N(1)-)-methyltransferase.